We begin with the raw amino-acid sequence, 289 residues long: Protease HtpX (289 aa).

2 consecutive transmembrane segments (helical) span residues 4–24 and 36–56; these read IMLFLATNLAVVLVLSVVLNI and LSGLLVMAAVFGFGGAFISLM. Histidine 143 is a binding site for Zn(2+). Glutamate 144 is an active-site residue. Residue histidine 147 coordinates Zn(2+). 2 helical membrane-spanning segments follow: residues 158–178 and 192–212; these read LMQGVVNTFVIFLSRFIANIV and MVYFGVSMVLELVFGFLASFL. Glutamate 221 is a Zn(2+) binding site.

The protein belongs to the peptidase M48B family. The cofactor is Zn(2+).

It localises to the cell inner membrane. This chain is Protease HtpX, found in Vibrio campbellii (strain ATCC BAA-1116).